Consider the following 290-residue polypeptide: Putative phosphatase MPN_427 (290 aa).

Aspartate 16 acts as the Nucleophile in catalysis. Aspartate 16 is a binding site for Mg(2+). Leucine 17 contacts phosphate. Aspartate 18 is a binding site for Mg(2+). Phosphate is bound by residues 53–54 (TG) and lysine 216. Positions 239 and 240 each coordinate Mg(2+). Asparagine 242 contributes to the phosphate binding site.

Belongs to the HAD-like hydrolase superfamily. Cof family. It depends on Mg(2+) as a cofactor.

The chain is Putative phosphatase MPN_427 from Mycoplasma pneumoniae (strain ATCC 29342 / M129 / Subtype 1) (Mycoplasmoides pneumoniae).